The primary structure comprises 463 residues: Chromosomal replication initiator protein DnaA (463 aa).

The interval 1 to 90 is domain I, interacts with DnaA modulators; that stretch reads MSLSLWQQCL…KPLSQIISQT (90 aa). Positions 91-126 are domain II; it reads VTASVSAPSAPIVRVAAPSRPSWDNAAPQPELSYRS. The domain III, AAA+ region stretch occupies residues 127–343; that stretch reads NVNPKHTFDN…GALNRVIANA (217 aa). Positions 171, 173, 174, and 175 each coordinate ATP. The domain IV, binds dsDNA stretch occupies residues 344 to 463; it reads NFTGRAITID…FSNLIRTLSS (120 aa).

This sequence belongs to the DnaA family. As to quaternary structure, oligomerizes as a right-handed, spiral filament on DNA at oriC.

The protein resides in the cytoplasm. Functionally, plays an essential role in the initiation and regulation of chromosomal replication. ATP-DnaA binds to the origin of replication (oriC) to initiate formation of the DNA replication initiation complex once per cell cycle. Binds the DnaA box (a 9 base pair repeat at the origin) and separates the double-stranded (ds)DNA. Forms a right-handed helical filament on oriC DNA; dsDNA binds to the exterior of the filament while single-stranded (ss)DNA is stabiized in the filament's interior. The ATP-DnaA-oriC complex binds and stabilizes one strand of the AT-rich DNA unwinding element (DUE), permitting loading of DNA polymerase. After initiation quickly degrades to an ADP-DnaA complex that is not apt for DNA replication. Binds acidic phospholipids. This Serratia proteamaculans (strain 568) protein is Chromosomal replication initiator protein DnaA.